A 374-amino-acid chain; its full sequence is Chaperone protein DnaJ (374 aa).

The region spanning 3–67 is the J domain; sequence DFYQILGVSR…ETRARYDQFG (65 aa). The tract at residues 99 to 118 is disordered; the sequence is GQSSQGGRSQRRGPQQGDDL. Residues 103–115 show a composition bias toward low complexity; the sequence is QGGRSQRRGPQQG. The CR-type zinc-finger motif lies at 132-214; sequence GQQREINIPH…CGGNGVKQVR (83 aa). The Zn(2+) site is built by Cys145, Cys148, Cys162, Cys165, Cys188, Cys191, Cys202, and Cys205. 4 CXXCXGXG motif repeats span residues 145–152, 162–169, 188–195, and 202–209; these read CEVCRGTG, CTTCGGSG, CPTCNGVG, and CTSCGGNG.

The protein belongs to the DnaJ family. As to quaternary structure, homodimer. The cofactor is Zn(2+).

It localises to the cytoplasm. Functionally, participates actively in the response to hyperosmotic and heat shock by preventing the aggregation of stress-denatured proteins and by disaggregating proteins, also in an autonomous, DnaK-independent fashion. Unfolded proteins bind initially to DnaJ; upon interaction with the DnaJ-bound protein, DnaK hydrolyzes its bound ATP, resulting in the formation of a stable complex. GrpE releases ADP from DnaK; ATP binding to DnaK triggers the release of the substrate protein, thus completing the reaction cycle. Several rounds of ATP-dependent interactions between DnaJ, DnaK and GrpE are required for fully efficient folding. Also involved, together with DnaK and GrpE, in the DNA replication of plasmids through activation of initiation proteins. This chain is Chaperone protein DnaJ, found in Prochlorococcus marinus subsp. pastoris (strain CCMP1986 / NIES-2087 / MED4).